A 183-amino-acid polypeptide reads, in one-letter code: MTSKVANTEVAQPYAQALLSIAKSKSLTEEFGTDARTLLNLLAENQQLRNFIDNPFIAAENKKALIKQILSEASPYLRNFLLLLVDKRRIFFLEEILQQYLALLRQLNQTVLAEVTSAVALTEDQQQAVKEKVLALTKARQVELATKVDSDLIGGVIIKVGSQVIDSSIRGQLRRLSLRLSNS.

Belongs to the ATPase delta chain family. In terms of assembly, F-type ATPases have 2 components, F(1) - the catalytic core - and F(0) - the membrane proton channel. F(1) has five subunits: alpha(3), beta(3), gamma(1), delta(1), epsilon(1). CF(0) has four main subunits: a(1), b(1), b'(1) and c(10-14). The alpha and beta chains form an alternating ring which encloses part of the gamma chain. F(1) is attached to F(0) by a central stalk formed by the gamma and epsilon chains, while a peripheral stalk is formed by the delta, b and b' chains.

It is found in the cellular thylakoid membrane. F(1)F(0) ATP synthase produces ATP from ADP in the presence of a proton or sodium gradient. F-type ATPases consist of two structural domains, F(1) containing the extramembraneous catalytic core and F(0) containing the membrane proton channel, linked together by a central stalk and a peripheral stalk. During catalysis, ATP synthesis in the catalytic domain of F(1) is coupled via a rotary mechanism of the central stalk subunits to proton translocation. In terms of biological role, this protein is part of the stalk that links CF(0) to CF(1). It either transmits conformational changes from CF(0) to CF(1) or is implicated in proton conduction. The sequence is that of ATP synthase subunit delta from Trichormus variabilis (strain ATCC 29413 / PCC 7937) (Anabaena variabilis).